The chain runs to 715 residues: Photosystem I P700 chlorophyll a apoprotein A1 (715 aa).

The next 8 helical transmembrane spans lie at V60–A83, L146–H169, L185–L209, T281–Y299, W336–Y359, L375–V401, A423–H445, and F521–L539. Positions 563 and 572 each coordinate [4Fe-4S] cluster. Helical transmembrane passes span H579 to W600 and L654 to F676. H665 serves as a coordination point for chlorophyll a'. Chlorophyll a-binding residues include M673 and Y681. Position 682 (W682) interacts with phylloquinone. The chain crosses the membrane as a helical span at residues A714–E715.

The protein belongs to the PsaA/PsaB family. As to quaternary structure, the PsaA/B heterodimer binds the P700 chlorophyll special pair and subsequent electron acceptors. PSI consists of a core antenna complex that captures photons, and an electron transfer chain that converts photonic excitation into a charge separation. The eukaryotic PSI reaction center is composed of at least 11 subunits. Requires P700 is a chlorophyll a/chlorophyll a' dimer, A0 is one or more chlorophyll a, A1 is one or both phylloquinones and FX is a shared 4Fe-4S iron-sulfur center. as cofactor.

Its subcellular location is the plastid. The protein localises to the chloroplast thylakoid membrane. It catalyses the reaction reduced [plastocyanin] + hnu + oxidized [2Fe-2S]-[ferredoxin] = oxidized [plastocyanin] + reduced [2Fe-2S]-[ferredoxin]. In terms of biological role, psaA and PsaB bind P700, the primary electron donor of photosystem I (PSI), as well as the electron acceptors A0, A1 and FX. PSI is a plastocyanin-ferredoxin oxidoreductase, converting photonic excitation into a charge separation, which transfers an electron from the donor P700 chlorophyll pair to the spectroscopically characterized acceptors A0, A1, FX, FA and FB in turn. Oxidized P700 is reduced on the lumenal side of the thylakoid membrane by plastocyanin. This chain is Photosystem I P700 chlorophyll a apoprotein A1, found in Phlegmariurus squarrosus (Rock tassel fern).